The chain runs to 885 residues: Leucine--tRNA ligase (885 aa).

Residues 48–58 (PYPSGKLHMGH) carry the 'HIGH' region motif. A 'KMSKS' region motif is present at residues 639–643 (TMSKS). Lys-642 provides a ligand contact to ATP.

The protein belongs to the class-I aminoacyl-tRNA synthetase family.

The protein localises to the cytoplasm. The enzyme catalyses tRNA(Leu) + L-leucine + ATP = L-leucyl-tRNA(Leu) + AMP + diphosphate. This chain is Leucine--tRNA ligase, found in Bordetella avium (strain 197N).